A 318-amino-acid polypeptide reads, in one-letter code: Deoxymugineic acid synthase 1 (318 aa).

Asp48 lines the NADP(+) pocket. Tyr53 acts as the Proton donor in catalysis. His116 provides a ligand contact to substrate. Residues 162–163 (CN), Gln184, 262–270 (FDEARMREN), and 277–285 (ELTEEERQR) contribute to the NADP(+) site.

Belongs to the aldo/keto reductase family. Confined to cells participating in long distance transport (e.g. in the parts of pericycle cells adjacent to the protoxylem and metaxylem) in roots and to vascular bundles in shoots.

The enzyme catalyses 2'-deoxymugineate + NAD(+) = 3''-deamino-3''-oxonicotianamine + NADH + H(+). It carries out the reaction 2'-deoxymugineate + NADP(+) = 3''-deamino-3''-oxonicotianamine + NADPH + H(+). It functions in the pathway siderophore biosynthesis. Its function is as follows. Catalyzes the reduction of a 3''-keto intermediate during the biosynthesis of 2'-deoxymugineic acid (DMA) from L-Met. Involved in the formation of phytosiderophores (MAs) belonging to the mugineic acid family and required to acquire iron. This chain is Deoxymugineic acid synthase 1, found in Oryza sativa subsp. japonica (Rice).